The primary structure comprises 332 residues: Glycerol-3-phosphate dehydrogenase [NAD(P)+] (332 aa).

Positions 11, 30, and 108 each coordinate NADPH. Sn-glycerol 3-phosphate is bound by residues Lys-108, Gly-137, and Ser-139. Ala-141 contributes to the NADPH binding site. The sn-glycerol 3-phosphate site is built by Lys-192, Asp-245, Ser-255, Arg-256, and Asn-257. The active-site Proton acceptor is the Lys-192. Residue Arg-256 coordinates NADPH. NADPH is bound by residues Val-280 and Glu-282.

It belongs to the NAD-dependent glycerol-3-phosphate dehydrogenase family.

Its subcellular location is the cytoplasm. It carries out the reaction sn-glycerol 3-phosphate + NAD(+) = dihydroxyacetone phosphate + NADH + H(+). It catalyses the reaction sn-glycerol 3-phosphate + NADP(+) = dihydroxyacetone phosphate + NADPH + H(+). The protein operates within membrane lipid metabolism; glycerophospholipid metabolism. Catalyzes the reduction of the glycolytic intermediate dihydroxyacetone phosphate (DHAP) to sn-glycerol 3-phosphate (G3P), the key precursor for phospholipid synthesis. This chain is Glycerol-3-phosphate dehydrogenase [NAD(P)+], found in Burkholderia ambifaria (strain MC40-6).